Reading from the N-terminus, the 312-residue chain is Apulose-4-phosphate transketolase subunit B (312 aa).

The protein belongs to the transketolase family. Probable heterodimer composed of AptA and AptB. It depends on thiamine diphosphate as a cofactor.

The enzyme catalyses apulose 4-phosphate + D-glyceraldehyde 3-phosphate = D-xylulose 5-phosphate + dihydroxyacetone phosphate. Its pathway is carbohydrate metabolism. In terms of biological role, involved in catabolism of D-apiose. Catalyzes the transfer of the glycolaldehyde group from apulose-4-phosphate to D-glyceraldehyde 3-phosphate, generating dihydroxyacetone phosphate and D-xylulose-5-phosphate. This is Apulose-4-phosphate transketolase subunit B from Phocaeicola vulgatus (strain ATCC 8482 / DSM 1447 / JCM 5826 / CCUG 4940 / NBRC 14291 / NCTC 11154) (Bacteroides vulgatus).